The sequence spans 129 residues: Follitropin subunit beta (129 aa).

The N-terminal stretch at 1–20 (MKTAQFYIFFFCWKAIWCNG) is a signal peptide. 6 disulfides stabilise this stretch: Cys21–Cys69, Cys35–Cys84, Cys38–Cys122, Cys46–Cys100, Cys50–Cys102, and Cys105–Cys112. 2 N-linked (GlcNAc...) asparagine glycosylation sites follow: Asn25 and Asn42.

It belongs to the glycoprotein hormones subunit beta family. Heterodimer. The active follitropin is a heterodimer composed of an alpha chain/CGA shared with other hormones and a unique beta chain/FSHB shown here.

It is found in the secreted. Functionally, together with the alpha chain CGA constitutes follitropin, the follicle-stimulating hormone, and provides its biological specificity to the hormone heterodimer. Binds FSHR, a G protein-coupled receptor, on target cells to activate downstream signaling pathways. Follitropin is involved in follicle development and spermatogenesis in reproductive organs. The polypeptide is Follitropin subunit beta (FSHB) (Monodelphis domestica (Gray short-tailed opossum)).